A 62-amino-acid chain; its full sequence is Defensin BmKDfsin6 (62 aa).

The signal sequence occupies residues 1 to 24; it reads MKVIAILFLLAFVLCTMEITMVEA. 3 disulfides stabilise this stretch: C28–C49, C35–C57, and C39–C59.

Belongs to the invertebrate defensin family. Type 2 subfamily. In terms of tissue distribution, highly expressed in non-venom gland (hemolymph) and moderately expressed in venom gland.

Its subcellular location is the secreted. In terms of biological role, antibacterial peptide active against Gram-positive bacteria, but not on Gram-negative bacteria. Also has weak blocking activity on Kv1.1/KCNA1, Kv1.2/KCNA2, Kv1.3/KCNA3, KCa3.1/KCNN4/IK, KCa2.3/KCNN3/SK3 and Kv11.1/KCNH2/ERG1 channels (tested at 1 uM). It inhibits potassium channel current by interacting with the pore region. The chain is Defensin BmKDfsin6 from Olivierus martensii (Manchurian scorpion).